We begin with the raw amino-acid sequence, 241 residues long: Uracil-DNA glycosylase (241 aa).

Aspartate 71 acts as the Proton acceptor in catalysis.

Belongs to the uracil-DNA glycosylase (UDG) superfamily. UNG family.

Its subcellular location is the cytoplasm. The catalysed reaction is Hydrolyzes single-stranded DNA or mismatched double-stranded DNA and polynucleotides, releasing free uracil.. Excises uracil residues from the DNA which can arise as a result of misincorporation of dUMP residues by DNA polymerase or due to deamination of cytosine. This chain is Uracil-DNA glycosylase, found in Xanthomonas campestris pv. campestris (strain 8004).